A 405-amino-acid chain; its full sequence is Amino acid transporter AVT1I (405 aa).

A run of 11 helical transmembrane segments spans residues 22–42 (CFNA…YSLA), 46–66 (WLSL…SLLI), 93–113 (IIVS…FLIL), 140–160 (FMAT…LSVL), 169–189 (LATT…GIGF), 201–221 (IPTA…LPTL), 234–254 (VLLI…VLGY), 278–298 (VAIY…ITPT), 318–338 (LLIS…LPFF), 343–363 (SLVG…LCYL), and 377–397 (IMLF…TYIA).

Belongs to the amino acid/polyamine transporter 2 family. Amino acid/auxin permease (AAAP) (TC 2.A.18.5) subfamily.

The protein localises to the membrane. The protein is Amino acid transporter AVT1I of Arabidopsis thaliana (Mouse-ear cress).